A 39-amino-acid chain; its full sequence is Cytochrome b559 subunit beta (39 aa).

A helical membrane pass occupies residues 14 to 30; the sequence is WLAVHGLAVPTVFFLGS. Heme is bound at residue H18.

Belongs to the PsbE/PsbF family. Heterodimer of an alpha subunit and a beta subunit. PSII is composed of 1 copy each of membrane proteins PsbA, PsbB, PsbC, PsbD, PsbE, PsbF, PsbH, PsbI, PsbJ, PsbK, PsbL, PsbM, PsbT, PsbX, PsbY, PsbZ, Psb30/Ycf12, at least 3 peripheral proteins of the oxygen-evolving complex and a large number of cofactors. It forms dimeric complexes. The cofactor is heme b.

It localises to the plastid. Its subcellular location is the chloroplast thylakoid membrane. This b-type cytochrome is tightly associated with the reaction center of photosystem II (PSII). PSII is a light-driven water:plastoquinone oxidoreductase that uses light energy to abstract electrons from H(2)O, generating O(2) and a proton gradient subsequently used for ATP formation. It consists of a core antenna complex that captures photons, and an electron transfer chain that converts photonic excitation into a charge separation. This is Cytochrome b559 subunit beta from Nicotiana glutinosa (Tobacco).